A 149-amino-acid polypeptide reads, in one-letter code: Calmodulin (149 aa).

The residue at position 2 (Ala-2) is an N-acetylalanine. EF-hand domains are found at residues 8 to 43 (EQISEFKEAFSLFDKDGDGTITTKELGTVMRSLGQN), 44 to 79 (PTEAELQDMINEVDADGNGTIDFPEFLTMMARKMRD), 81 to 116 (DSEEEIKEAFKVFDKDGNGYISAAELRHVMTNLGEK), and 117 to 149 (LTDNEVDEMIREADIDGDGQINYEEFVKMMLSK). Ca(2+)-binding residues include Asp-21, Asp-23, Asp-25, Thr-27, Glu-32, Asp-57, Asp-59, Asn-61, Thr-63, Glu-68, Asp-94, Asp-96, Asn-98, Tyr-100, Glu-105, Asp-130, Asp-132, Asp-134, Gln-136, and Glu-141.

Belongs to the calmodulin family. Post-translationally, trimethylation of Lys-116 observed in other calmodulins is absent here.

Its function is as follows. Calmodulin mediates the control of a large number of enzymes, ion channels and other proteins by Ca(2+). Among the enzymes to be stimulated by the calmodulin-Ca(2+) complex are a number of protein kinases and phosphatases. The polypeptide is Calmodulin (CMD1) (Pleurotus cornucopiae (Cornucopia mushroom)).